A 119-amino-acid chain; its full sequence is Large ribosomal subunit protein bL20 (119 aa).

It belongs to the bacterial ribosomal protein bL20 family.

Functionally, binds directly to 23S ribosomal RNA and is necessary for the in vitro assembly process of the 50S ribosomal subunit. It is not involved in the protein synthesizing functions of that subunit. In Azoarcus sp. (strain BH72), this protein is Large ribosomal subunit protein bL20.